Consider the following 262-residue polypeptide: MIFVLDVGNTNAVLGVFEEGELRQHWRMETDRHKTEDEYGMLVKQLLEHEGLSFEDVKGIIVSSVVPPIMFALERMCEKYFKIKPLVVGPGIKTGLNIKYENPREVGADRIVNAVAGIHLYGSPLIIVDFGTATTYCYINEEKHYMGGVITPGIMISAEALYSRAAKLPRIEITKPSSVVGKNTVSAMQSGILYGYVGQVEGIVKRMKEEAKQEPKVIATGGLAKLISEESNVIDVVDPFLTLKGLYMLYERNANLQHEKGE.

6–13 (DVGNTNAV) contributes to the ATP binding site. Residues tyrosine 100 and 107–110 (GADR) contribute to the substrate site. Aspartate 109 functions as the Proton acceptor in the catalytic mechanism. Aspartate 129 lines the K(+) pocket. Threonine 132 contacts ATP. Threonine 184 is a substrate binding site.

This sequence belongs to the type III pantothenate kinase family. Homodimer. NH4(+) is required as a cofactor. Requires K(+) as cofactor.

It localises to the cytoplasm. The enzyme catalyses (R)-pantothenate + ATP = (R)-4'-phosphopantothenate + ADP + H(+). It participates in cofactor biosynthesis; coenzyme A biosynthesis; CoA from (R)-pantothenate: step 1/5. Catalyzes the phosphorylation of pantothenate (Pan), the first step in CoA biosynthesis. This Bacillus anthracis (strain A0248) protein is Type III pantothenate kinase.